The primary structure comprises 225 residues: Peptidyl-tRNA hydrolase (225 aa).

TRNA is bound at residue Tyr-14. His-19 (proton acceptor) is an active-site residue. TRNA-binding residues include Phe-64, Asn-66, and Asn-112. The tract at residues 187–225 (MQPPKPEKPKGEAKPAAPEAPEAAPDTRSALQRLADRFR) is disordered. Residues 200-210 (KPAAPEAPEAA) show a composition bias toward low complexity.

It belongs to the PTH family. As to quaternary structure, monomer.

It localises to the cytoplasm. The catalysed reaction is an N-acyl-L-alpha-aminoacyl-tRNA + H2O = an N-acyl-L-amino acid + a tRNA + H(+). Hydrolyzes ribosome-free peptidyl-tRNAs (with 1 or more amino acids incorporated), which drop off the ribosome during protein synthesis, or as a result of ribosome stalling. Functionally, catalyzes the release of premature peptidyl moieties from peptidyl-tRNA molecules trapped in stalled 50S ribosomal subunits, and thus maintains levels of free tRNAs and 50S ribosomes. In Cereibacter sphaeroides (strain ATCC 17025 / ATH 2.4.3) (Rhodobacter sphaeroides), this protein is Peptidyl-tRNA hydrolase.